We begin with the raw amino-acid sequence, 139 residues long: Small ribosomal subunit protein uS12 (139 aa).

Disordered stretches follow at residues Met1 to Pro22 and Lys37 to Lys57. A compositionally biased stretch (basic residues) spans Arg9 to Ser19. Asp102 carries the post-translational modification 3-methylthioaspartic acid.

Belongs to the universal ribosomal protein uS12 family. Part of the 30S ribosomal subunit. Contacts proteins S8 and S17. May interact with IF1 in the 30S initiation complex.

Its function is as follows. With S4 and S5 plays an important role in translational accuracy. Functionally, interacts with and stabilizes bases of the 16S rRNA that are involved in tRNA selection in the A site and with the mRNA backbone. Located at the interface of the 30S and 50S subunits, it traverses the body of the 30S subunit contacting proteins on the other side and probably holding the rRNA structure together. The combined cluster of proteins S8, S12 and S17 appears to hold together the shoulder and platform of the 30S subunit. The polypeptide is Small ribosomal subunit protein uS12 (Limosilactobacillus reuteri (strain DSM 20016) (Lactobacillus reuteri)).